Consider the following 387-residue polypeptide: S-adenosylmethionine synthase (387 aa).

Residue His17 coordinates ATP. Asp19 is a Mg(2+) binding site. Glu45 provides a ligand contact to K(+). L-methionine-binding residues include Glu58 and Gln101. The tract at residues 101–111 (QSPDIAQGVDR) is flexible loop. Residues 168–170 (DAK), 234–235 (RF), Asp243, 249–250 (RK), Ala266, and Lys270 each bind ATP. Asp243 is an L-methionine binding site. Lys274 contacts L-methionine.

Belongs to the AdoMet synthase family. As to quaternary structure, homotetramer; dimer of dimers. The cofactor is Mg(2+). K(+) serves as cofactor.

It is found in the cytoplasm. It catalyses the reaction L-methionine + ATP + H2O = S-adenosyl-L-methionine + phosphate + diphosphate. It participates in amino-acid biosynthesis; S-adenosyl-L-methionine biosynthesis; S-adenosyl-L-methionine from L-methionine: step 1/1. In terms of biological role, catalyzes the formation of S-adenosylmethionine (AdoMet) from methionine and ATP. The overall synthetic reaction is composed of two sequential steps, AdoMet formation and the subsequent tripolyphosphate hydrolysis which occurs prior to release of AdoMet from the enzyme. This Bordetella bronchiseptica (strain ATCC BAA-588 / NCTC 13252 / RB50) (Alcaligenes bronchisepticus) protein is S-adenosylmethionine synthase.